A 37-amino-acid polypeptide reads, in one-letter code: Esculentin-2Rb (37 aa).

A disulfide bond links Cys-31 and Cys-37.

In terms of tissue distribution, expressed by the skin glands.

Its subcellular location is the secreted. Functionally, antimicrobial peptide. This Pelophylax ridibundus (Marsh frog) protein is Esculentin-2Rb.